A 343-amino-acid chain; its full sequence is Palmitoyltransferase ZDHHC4 (343 aa).

The Lumenal segment spans residues 1–2 (MD). Residues 3–23 (FLVLFLLYLALVLLGFVMICI) traverse the membrane as a helical segment. Residues 24–67 (GSKTHYLQGLISRGAQVFSYIIPECLQRAMLSVLHYLFHTRNYT) lie on the Cytoplasmic side of the membrane. Residues 68 to 88 (FVVLHLILQGMVYTEYTWEIF) traverse the membrane as a helical segment. Residues 89–95 (GLCQQLE) are Lumenal-facing. The helical transmembrane segment at 96–116 (FSLYYLFLPYLLLIVNLLFFT) threads the bilayer. The Cytoplasmic portion of the chain corresponds to 117-196 (LSCVTNPGTI…GAWNTRYFLS (80 aa)). Positions 149 to 199 (VRCPTCDLRKPARSKHCSVCNRCVHRFDHHCVWVNNCIGAWNTRYFLSYLF) constitute a DHHC domain. Catalysis depends on Cys-179, which acts as the S-palmitoyl cysteine intermediate. Residues 197–217 (YLFTLTASAATMAVVSTVFLV) traverse the membrane as a helical segment. Over 218 to 255 (RLVVMSDVYLQTYVDDLGHLQVVDTVFLVQYLFLTFPR) the chain is Lumenal. Residues 256–276 (IVFLVGFVVVLSFLLGGYLCF) form a helical membrane-spanning segment. At 277 to 343 (CLYLAATNQT…ATACYERKEK (67 aa)) the chain is on the cytoplasmic side. Positions 340–343 (RKEK) match the Di-lysine motif motif.

The protein belongs to the DHHC palmitoyltransferase family. As to quaternary structure, interacts with CPT1A.

It is found in the endoplasmic reticulum membrane. It localises to the golgi apparatus membrane. Its subcellular location is the cell membrane. The catalysed reaction is L-cysteinyl-[protein] + hexadecanoyl-CoA = S-hexadecanoyl-L-cysteinyl-[protein] + CoA. Its function is as follows. Palmitoyltransferase that could catalyze the addition of palmitate onto protein substrates including the D(2) dopamine receptor DRD2, GSK3B or MAVS. Mediates GSK3B palmitoylation to prevent its AKT1-mediated phosphorylation leading to activation of the STAT3 signaling pathway. Also catalyzes MAVS palmitoylation which promotes its stabilization and activation by inhibiting 'Lys-48'- but facilitating 'Lys-63'-linked ubiquitination. The sequence is that of Palmitoyltransferase ZDHHC4 from Bos taurus (Bovine).